The primary structure comprises 280 residues: Sulfur carrier protein FdhD (280 aa).

Cysteine 121 acts as the Cysteine persulfide intermediate in catalysis. 258–263 is a Mo-bis(molybdopterin guanine dinucleotide) binding site; it reads FSRPGR.

Belongs to the FdhD family.

It localises to the cytoplasm. Required for formate dehydrogenase (FDH) activity. Acts as a sulfur carrier protein that transfers sulfur from IscS to the molybdenum cofactor prior to its insertion into FDH. The chain is Sulfur carrier protein FdhD from Cronobacter sakazakii (strain ATCC BAA-894) (Enterobacter sakazakii).